The chain runs to 271 residues: Mannosyl-3-phosphoglycerate phosphatase (271 aa).

Aspartate 13 acts as the Nucleophile in catalysis. Mg(2+)-binding residues include aspartate 13, aspartate 15, and aspartate 214.

The protein belongs to the HAD-like hydrolase superfamily. MPGP family. Requires Mg(2+) as cofactor.

It localises to the cytoplasm. It carries out the reaction 2-O-(alpha-D-mannosyl)-3-phosphoglycerate + H2O = (2R)-2-O-(alpha-D-mannosyl)-glycerate + phosphate. This Escherichia coli O7:K1 (strain IAI39 / ExPEC) protein is Mannosyl-3-phosphoglycerate phosphatase.